Reading from the N-terminus, the 339-residue chain is MKKFDISVLSVAPLRQGETMKQGIDSAVSLAKAVDNMGYKRIWFAEHHNHDAYASAATVSIVQHILANTKDIRVGSGGIMLPNHSPLIVAEQFGTLETLYPNRVDLALGRAPGTDQKTADVIRRSNHNGVFFFEREVNDILRFVGDKSVQGEVRAYPGIGTHVPVFVLGSSTDSAEIAAKLGLPYAFGAQFSPHSMEEALSIYRENFQPSSYLQEPYVIACINVIAAESIDEASFISASHLQVYIDIYTNNLSKLIPPTENFLESLSQFELEILHSRLGYTIMGDRETIRRELIDFQQMYHADELIVLSNIYELSKEIQSYEILKQVVDELFKKRMEQL.

The protein to bacterial alkanal monooxygenase alpha and beta chains.

This is an uncharacterized protein from Bacillus subtilis (strain 168).